The following is a 480-amino-acid chain: Glycerol 3-phosphate dehydrogenase (480 aa).

FAD-binding positions include I12, E31, 40-41, and 45-47; these read TT and SAI. Sn-glycerol 3-phosphate-binding residues include S45 and H49. Catalysis depends on H49, which acts as the Proton acceptor. V172 is an FAD binding site. Sn-glycerol 3-phosphate is bound by residues K249 and R310. Residue 335-336 coordinates FAD; it reads IE. A sn-glycerol 3-phosphate-binding site is contributed by S337. S341 serves as a coordination point for FAD. [2Fe-2S] cluster is bound by residues C400, C402, C437, and C442.

[2Fe-2S] cluster is required as a cofactor.

The catalysed reaction is sn-glycerol 3-phosphate + A = dihydroxyacetone phosphate + AH2. It functions in the pathway polyol metabolism; glycerol degradation via glycerol kinase pathway; glycerone phosphate from sn-glycerol 3-phosphate (aerobic route): step 1/1. Its function is as follows. Catalyzes the dehydrogenation of glycerol 3-phosphate to dihydroxyacetone phosphate. Is probably involved in anaerobic glycerol metabolism. Active in vitro with the artificial electron acceptor 2,6-dichlorophenolindophenol (DCPIP), but not with NAD or NADP. Also displays a very low oxidase activity in vitro on glycerol 3-phosphate with O2 as the electron acceptor, but this activity is most likely not physiological. The polypeptide is Glycerol 3-phosphate dehydrogenase (Caloramator mitchellensis).